The sequence spans 201 residues: Ribosome maturation factor RimP (201 aa).

The protein belongs to the RimP family.

The protein localises to the cytoplasm. Its function is as follows. Required for maturation of 30S ribosomal subunits. The polypeptide is Ribosome maturation factor RimP (Rhizobium johnstonii (strain DSM 114642 / LMG 32736 / 3841) (Rhizobium leguminosarum bv. viciae)).